Reading from the N-terminus, the 233-residue chain is Orotidine 5'-phosphate decarboxylase (233 aa).

Substrate is bound by residues Asp-12, Lys-34, 61-70, Thr-120, Arg-181, Gln-190, Gly-210, and Arg-211; that span reads DLKFHDIPNT. The active-site Proton donor is Lys-63.

Belongs to the OMP decarboxylase family. Type 1 subfamily. Homodimer.

The catalysed reaction is orotidine 5'-phosphate + H(+) = UMP + CO2. It participates in pyrimidine metabolism; UMP biosynthesis via de novo pathway; UMP from orotate: step 2/2. Functionally, catalyzes the decarboxylation of orotidine 5'-monophosphate (OMP) to uridine 5'-monophosphate (UMP). In Hahella chejuensis (strain KCTC 2396), this protein is Orotidine 5'-phosphate decarboxylase.